Here is a 322-residue protein sequence, read N- to C-terminus: Chemokine XC receptor 1 (322 aa).

The Extracellular portion of the chain corresponds to M1–T27. A helical transmembrane segment spans residues I28–Y55. The Cytoplasmic portion of the chain corresponds to E56–F65. The chain crosses the membrane as a helical span at residues I66–S85. The Extracellular segment spans residues A86–K98. A disulfide bridge links C97 with C170. The helical transmembrane segment at F99–I120 threads the bilayer. The Cytoplasmic segment spans residues H121–T137. A helical transmembrane segment spans residues L138–F162. Topologically, residues H163 to H185 are extracellular. A helical membrane pass occupies residues N186 to L204. Topologically, residues R205–R220 are cytoplasmic. Residues L221 to K243 form a helical membrane-spanning segment. The Extracellular portion of the chain corresponds to T244–I259. The helical transmembrane segment at A260–G283 threads the bilayer. Over I284–Y322 the chain is Cytoplasmic.

The protein belongs to the G-protein coupled receptor 1 family. In terms of tissue distribution, expressed by dendritic cells from the thymus, slpeen, subcutaneous lymph nodes and mesenteric lymph nodes.

The protein localises to the cell membrane. In terms of biological role, receptor for chemokines SCYC1 and SCYC2. Subsequently transduces a signal by increasing the intracellular calcium ions level. Receptor for XCL1/Lymphotactin. The sequence is that of Chemokine XC receptor 1 (Xcr1) from Mus musculus (Mouse).